Here is a 250-residue protein sequence, read N- to C-terminus: Carboxymethylproline synthase (250 aa).

60–64 (AGGDF) contacts malonyl-CoA.

This sequence belongs to the enoyl-CoA hydratase/isomerase family. As to quaternary structure, homotrimer.

It catalyses the reaction (S)-1-pyrroline-5-carboxylate + malonyl-CoA + H2O + H(+) = (2S,5S)-5-carboxymethylproline + CO2 + CoA. It functions in the pathway antibiotic biosynthesis; carbapenem biosynthesis. Catalyzes the formation of (2S,5S)-carboxymethylproline (t-CMP) from malonyl-CoA and (S)-1-pyrroline-5-carboxylate, the first step in the biosynthesis of (5R)-carbapen-2-em-3-carboxylate, a beta-lactam antibiotic of the carbapenem class. Also catalyzes the independent decarboxylation of malonyl-CoA and methylmalonyl-CoA and the hydrolysis of CoA esters such as acetyl-CoA and propionyl-CoA. Catalyzes the reaction with a C2 epimeric mixture of methylmalonyl-CoA to give a 55:45 mixture of (6R)- and (6S)-epimers of 6-methyl-t-CMP, under standard incubation conditions. This Pectobacterium carotovorum subsp. carotovorum (Erwinia carotovora subsp. carotovora) protein is Carboxymethylproline synthase.